The sequence spans 1055 residues: Elongation factor 3 (1055 aa).

Position 45 (Val-45) interacts with ADP. HEAT repeat units follow at residues 48–86 (FTQI…NGAA), 96–133 (SAEN…SMNP), 134–172 (WASF…SAPF), 176–213 (EAMP…LVEN), 218–255 (KFVP…APTI), 257–290 (LIAP…LVDS), and 296–337 (PFLP…VPAE). 2 consecutive ABC transporter domains span residues 447 to 659 (CNIE…SYYQ) and 687 to 1004 (LKMR…KKAA). Asn-723, Glu-933, Asn-936, and His-962 together coordinate ADP. Positions 1024-1055 (EKKLSAADKRKAKKDRMARRKRGEEVFSDEEL) are disordered. A compositionally biased stretch (basic residues) spans 1033-1044 (RKAKKDRMARRK).

This sequence belongs to the ABC transporter superfamily. ABCF family. EF3 subfamily. Interacts with CCH1; the interaction is direct and required for the localization of CCH1 to the cell membrane.

The protein resides in the cytoplasm. It localises to the cytosol. It catalyses the reaction ATP + H2O = ADP + phosphate + H(+). It participates in protein biosynthesis; polypeptide chain elongation. Ribosome-dependent ATPase that functions in cytoplasmic translation elongation. Required for the ATP-dependent release of deacylated tRNA from the ribosomal E-site during protein biosynthesis. Stimulates the eEF1A-dependent binding of aminoacyl-tRNA to the ribosomal A-site, which has reduced affinity for tRNA as long as the E-site is occupied. Assists translation termination by stimulating the release of nascent protein from the ribosome by release factors. Appears to localize calcium-channel protein CCH1 to the plasma membrane. This Cryptococcus neoformans var. grubii serotype A (strain H99 / ATCC 208821 / CBS 10515 / FGSC 9487) (Filobasidiella neoformans var. grubii) protein is Elongation factor 3.